A 185-amino-acid chain; its full sequence is Small ribosomal subunit protein uS4 (185 aa).

One can recognise an S4 RNA-binding domain in the interval 107-179 (RRLQTLVYRK…NGRRKRKNNH (73 aa)). Residues 161–185 (NTPLTNPEINGRRKRKNNHAGKEDN) are disordered.

It belongs to the universal ribosomal protein uS4 family.

The polypeptide is Small ribosomal subunit protein uS4 (Entamoeba histolytica (strain ATCC 30459 / HM-1:IMSS / ABRM)).